Here is a 423-residue protein sequence, read N- to C-terminus: Serine--tRNA ligase (423 aa).

230–232 (TAE) contacts L-serine. Residue 261-263 (RSE) participates in ATP binding. Glu-284 lines the L-serine pocket. 348–351 (EISS) provides a ligand contact to ATP. Position 383 (Ser-383) interacts with L-serine.

Belongs to the class-II aminoacyl-tRNA synthetase family. Type-1 seryl-tRNA synthetase subfamily. Homodimer. The tRNA molecule binds across the dimer.

The protein localises to the cytoplasm. The enzyme catalyses tRNA(Ser) + L-serine + ATP = L-seryl-tRNA(Ser) + AMP + diphosphate + H(+). It catalyses the reaction tRNA(Sec) + L-serine + ATP = L-seryl-tRNA(Sec) + AMP + diphosphate + H(+). Its pathway is aminoacyl-tRNA biosynthesis; selenocysteinyl-tRNA(Sec) biosynthesis; L-seryl-tRNA(Sec) from L-serine and tRNA(Sec): step 1/1. In terms of biological role, catalyzes the attachment of serine to tRNA(Ser). Is also able to aminoacylate tRNA(Sec) with serine, to form the misacylated tRNA L-seryl-tRNA(Sec), which will be further converted into selenocysteinyl-tRNA(Sec). The sequence is that of Serine--tRNA ligase from Levilactobacillus brevis (strain ATCC 367 / BCRC 12310 / CIP 105137 / JCM 1170 / LMG 11437 / NCIMB 947 / NCTC 947) (Lactobacillus brevis).